The sequence spans 348 residues: MVNNFSQAEAVELCYKNVNESCIKTPYSPGPRSILYAVLGFGAVLAAFGNLLVMIAILHFKQLHTPTNFLIASLACADFLVGVTVMPFSTVRSVESCWYFGDSYCKFHTCFDTSFCFASLFHLCCISVDRYIAVTDPLTYPTKFTVSVSGICIVLSWFFSVTYSFSIFYTGANEEGIEELVVALTCVGGCQAPLNQNWVLLCFLLFFIPNVAMVFIYSKIFLVAKHQARKIESTASQAQSSSESYKERVAKRERKAAKTLGIAMAAFLVSWLPYLVDAVIDAYMNFITPPYVYEILVWCVYYNSAMNPLIYAFFYQWFGKAIKLIVSGKVLRTDSSTTNLFSEEVETD.

Residues 1–33 (MVNNFSQAEAVELCYKNVNESCIKTPYSPGPRS) lie on the Extracellular side of the membrane. Residues asparagine 4 and asparagine 19 are each glycosylated (N-linked (GlcNAc...) asparagine). 2 cysteine pairs are disulfide-bonded: cysteine 22–cysteine 186 and cysteine 105–cysteine 190. A helical membrane pass occupies residues 34-58 (ILYAVLGFGAVLAAFGNLLVMIAIL). The Cytoplasmic portion of the chain corresponds to 59-68 (HFKQLHTPTN). The chain crosses the membrane as a helical span at residues 69-90 (FLIASLACADFLVGVTVMPFST). The Extracellular portion of the chain corresponds to 91-105 (VRSVESCWYFGDSYC). Residues 106–128 (KFHTCFDTSFCFASLFHLCCISV) form a helical membrane-spanning segment. Residues aspartate 112 and threonine 113 each coordinate spermidine. Residues 129 to 148 (DRYIAVTDPLTYPTKFTVSV) are Cytoplasmic-facing. The chain crosses the membrane as a helical span at residues 149 to 170 (SGICIVLSWFFSVTYSFSIFYT). Over 171 to 196 (GANEEGIEELVVALTCVGGCQAPLNQ) the chain is Extracellular. The interval 174–187 (EEGIEELVVALTCV) is extracellular Loop 2 (ECL2). Residues 197–218 (NWVLLCFLLFFIPNVAMVFIYS) form a helical membrane-spanning segment. The Cytoplasmic portion of the chain corresponds to 219 to 256 (KIFLVAKHQARKIESTASQAQSSSESYKERVAKRERKA). A helical transmembrane segment spans residues 257 to 280 (AKTLGIAMAAFLVSWLPYLVDAVI). The Extracellular portion of the chain corresponds to 281–293 (DAYMNFITPPYVY). A helical membrane pass occupies residues 294 to 314 (EILVWCVYYNSAMNPLIYAFF). Residues 315–348 (YQWFGKAIKLIVSGKVLRTDSSTTNLFSEEVETD) are Cytoplasmic-facing.

Belongs to the G-protein coupled receptor 1 family.

Its subcellular location is the cell membrane. Olfactory receptor specific for trace amines, such as N,N-dimethylcyclohexylamine (DMCHA) and beta-phenylethylamine (beta-PEA). In contrast to mouse and rat orthologs, not activated by triethylamine, cadaverine (CAD) or spermidine. Trace amine compounds are enriched in animal body fluids and act on trace amine-associated receptors (TAARs) to elicit both intraspecific and interspecific innate behaviors. Trace amine-binding causes a conformation change that triggers signaling via G(s)-class of G alpha proteins (GNAL or GNAS). In mature olfactory sensory neurons, TAAR9 is coupled with GNAL/G(olf)G alpha protein and mediates activation of adenylate cyclase activity to activate cAMP signaling and eventually transmit odorant signals to achieve membrane depolarization. In immature olfactory sensory neurons, TAAR9 is coupled with GNAS/G(s) G alpha proteins. In Homo sapiens (Human), this protein is Trace amine-associated receptor 9.